Consider the following 249-residue polypeptide: Proteasome subunit alpha type-7 (249 aa).

Belongs to the peptidase T1A family. In terms of assembly, the 26S proteasome consists of a 20S proteasome core and two 19S regulatory subunits. The 20S proteasome core is a barrel-shaped complex made of 28 subunits that are arranged in four stacked rings. The two outer rings are each formed by seven alpha subunits, and the two inner rings are formed by seven beta subunits. The proteolytic activity is exerted by three beta-subunits PSMB5, PSMB6 and PSMB7. PSMA7 interacts directly with the PSMG1-PSMG2 heterodimer which promotes 20S proteasome assembly. Interacts with HIF1A. Interacts with RAB7A. Interacts with PRKN. Interacts with ABL1 and ABL2. Interacts with EMAP2. Interacts with MAVS.

Its subcellular location is the cytoplasm. The protein localises to the nucleus. In terms of biological role, component of the 20S core proteasome complex involved in the proteolytic degradation of most intracellular proteins. This complex plays numerous essential roles within the cell by associating with different regulatory particles. Associated with two 19S regulatory particles, forms the 26S proteasome and thus participates in the ATP-dependent degradation of ubiquitinated proteins. The 26S proteasome plays a key role in the maintenance of protein homeostasis by removing misfolded or damaged proteins that could impair cellular functions, and by removing proteins whose functions are no longer required. Associated with the PA200 or PA28, the 20S proteasome mediates ubiquitin-independent protein degradation. This type of proteolysis is required in several pathways including spermatogenesis (20S-PA200 complex) or generation of a subset of MHC class I-presented antigenic peptides (20S-PA28 complex). Inhibits the transactivation function of HIF-1A under both normoxic and hypoxia-mimicking conditions. The interaction with EMAP2 increases the proteasome-mediated HIF-1A degradation under the hypoxic conditions. Plays a role in hepatitis C virus internal ribosome entry site-mediated translation. Mediates nuclear translocation of the androgen receptor (AR) and thereby enhances androgen-mediated transactivation. Promotes MAVS degradation and thereby negatively regulates MAVS-mediated innate immune response. This Gallus gallus (Chicken) protein is Proteasome subunit alpha type-7 (PSMA7).